The following is a 417-amino-acid chain: 26S proteasome regulatory subunit RPN14 (417 aa).

WD repeat units lie at residues 134 to 173 (AHVS…NPRT), 176 to 215 (GHRA…TIHT), 242 to 281 (ISTS…QTIQ), 285 to 325 (KFTC…CPVG), 330 to 371 (NEGT…PAIE), and 380 to 416 (SNDD…NLSN).

This sequence belongs to the WD repeat PAAF1/RPN14 family. In terms of assembly, associates with the 19S proteasome regulatory particle (RP). Interacts directly with RPT5 and RPT6.

It localises to the cytoplasm. The protein resides in the nucleus. Functionally, acts as a regulatory subunit of the 26 proteasome which is involved in the ATP-dependent degradation of ubiquitinated proteins. Is not a genuine component of the 26S proteasome, but an auxiliary factor that interacts with the proteasomal ATPase of 19S regulatory particle (RP). Acts as a chaperone which regulates the highly structured assembly of the 19S regulatory particle. Involved in the substrate specificity of the 26S proteasome and is especially involved in the degradation of ubiquitinated GCN4. May contribute to the stability of the 26S proteasome in some stress conditions. This is 26S proteasome regulatory subunit RPN14 (RPN14) from Saccharomyces cerevisiae (strain ATCC 204508 / S288c) (Baker's yeast).